Consider the following 200-residue polypeptide: 3-isopropylmalate dehydratase small subunit (200 aa).

This sequence belongs to the LeuD family. LeuD type 1 subfamily. As to quaternary structure, heterodimer of LeuC and LeuD.

It catalyses the reaction (2R,3S)-3-isopropylmalate = (2S)-2-isopropylmalate. It participates in amino-acid biosynthesis; L-leucine biosynthesis; L-leucine from 3-methyl-2-oxobutanoate: step 2/4. Its function is as follows. Catalyzes the isomerization between 2-isopropylmalate and 3-isopropylmalate, via the formation of 2-isopropylmaleate. The chain is 3-isopropylmalate dehydratase small subunit from Haemophilus influenzae (strain 86-028NP).